We begin with the raw amino-acid sequence, 413 residues long: Lamin tail domain-containing protein 1 (413 aa).

Disordered stretches follow at residues 1 to 25 (MMKEASEPLASVTSINKQDSKVQDG) and 102 to 128 (HKDSSLGKQSTSSMVPRRQPQSSSDVD). A compositionally biased stretch (polar residues) spans 107–128 (LGKQSTSSMVPRRQPQSSSDVD). The LTD domain maps to 169 to 287 (EVGQFTSSSL…EAIAWYTPIH (119 aa)). The interval 356–413 (LPNKSPWCRNPNTSPHPYSSLIDSHDSDISESSLDTQLKPQPTKPKPDPGTKKKKAKS) is disordered. Residues 385 to 396 (SESSLDTQLKPQ) are compositionally biased toward low complexity.

The protein belongs to the intermediate filament family.

In Mus musculus (Mouse), this protein is Lamin tail domain-containing protein 1 (Lmntd1).